The chain runs to 150 residues: Large ribosomal subunit protein uL15 (150 aa).

Belongs to the universal ribosomal protein uL15 family. As to quaternary structure, part of the 50S ribosomal subunit.

In terms of biological role, binds to the 23S rRNA. The sequence is that of Large ribosomal subunit protein uL15 from Rickettsia prowazekii (strain Madrid E).